Reading from the N-terminus, the 353-residue chain is S-adenosylmethionine:tRNA ribosyltransferase-isomerase (353 aa).

The protein belongs to the QueA family. Monomer.

It is found in the cytoplasm. The catalysed reaction is 7-aminomethyl-7-carbaguanosine(34) in tRNA + S-adenosyl-L-methionine = epoxyqueuosine(34) in tRNA + adenine + L-methionine + 2 H(+). It participates in tRNA modification; tRNA-queuosine biosynthesis. Functionally, transfers and isomerizes the ribose moiety from AdoMet to the 7-aminomethyl group of 7-deazaguanine (preQ1-tRNA) to give epoxyqueuosine (oQ-tRNA). The polypeptide is S-adenosylmethionine:tRNA ribosyltransferase-isomerase (Marinomonas sp. (strain MWYL1)).